A 111-amino-acid chain; its full sequence is MAEFKHVFVCVQDRPPGHPQGSCAQRGSREVFQAFMEKIQTDPQLFMTTVITPTGCMNACMMGPVVVVYPDGVWYGQVKPEDVDEIVEKHLKGGEPVERLVISKGKPPGMF.

C10, C23, C56, and C60 together coordinate [2Fe-2S] cluster.

In terms of assembly, homodimer in solution. Requires [2Fe-2S] cluster as cofactor.

Ferredoxins are iron-sulfur proteins that transfer electrons in a wide variety of metabolic reactions. The polypeptide is Ferredoxin, 2Fe-2S (fdx4) (Aquifex aeolicus (strain VF5)).